A 122-amino-acid chain; its full sequence is Large ribosomal subunit protein bL12 (122 aa).

The protein belongs to the bacterial ribosomal protein bL12 family. In terms of assembly, homodimer. Part of the ribosomal stalk of the 50S ribosomal subunit. Forms a multimeric L10(L12)X complex, where L10 forms an elongated spine to which 2 to 4 L12 dimers bind in a sequential fashion. Binds GTP-bound translation factors.

Functionally, forms part of the ribosomal stalk which helps the ribosome interact with GTP-bound translation factors. Is thus essential for accurate translation. The polypeptide is Large ribosomal subunit protein bL12 (Actinobacillus succinogenes (strain ATCC 55618 / DSM 22257 / CCUG 43843 / 130Z)).